The chain runs to 269 residues: tRNA pseudouridine synthase A (269 aa).

Aspartate 51 (nucleophile) is an active-site residue. Tyrosine 109 serves as a coordination point for substrate.

This sequence belongs to the tRNA pseudouridine synthase TruA family. As to quaternary structure, homodimer.

It catalyses the reaction uridine(38/39/40) in tRNA = pseudouridine(38/39/40) in tRNA. Functionally, formation of pseudouridine at positions 38, 39 and 40 in the anticodon stem and loop of transfer RNAs. The polypeptide is tRNA pseudouridine synthase A (Histophilus somni (strain 2336) (Haemophilus somnus)).